Here is an 881-residue protein sequence, read N- to C-terminus: Probable alpha/beta-glucosidase agdC (881 aa).

Residues M1–A14 form the signal peptide. 3 N-linked (GlcNAc...) asparagine glycosylation sites follow: N171, N293, and N373. D422 (nucleophile) is an active-site residue. Residue E425 is part of the active site. Residues Y440–L485 are disordered. Over residues P448–G463 the composition is skewed to pro residues. N-linked (GlcNAc...) asparagine glycosylation is present at N506. D571 functions as the Proton donor in the catalytic mechanism. N-linked (GlcNAc...) asparagine glycans are attached at residues N572, N608, and N742.

This sequence belongs to the glycosyl hydrolase 31 family.

The protein localises to the secreted. The catalysed reaction is Hydrolysis of terminal, non-reducing (1-&gt;4)-linked alpha-D-glucose residues with release of alpha-D-glucose.. It catalyses the reaction Hydrolysis of terminal, non-reducing beta-D-glucosyl residues with release of beta-D-glucose.. Glucosidase involved in the degradation of cellulosic biomass. Has both alpha- and beta-glucosidase activity. This chain is Probable alpha/beta-glucosidase agdC (agdC), found in Neosartorya fischeri (strain ATCC 1020 / DSM 3700 / CBS 544.65 / FGSC A1164 / JCM 1740 / NRRL 181 / WB 181) (Aspergillus fischerianus).